The primary structure comprises 243 residues: UPF0246 protein SAG2081 (243 aa).

It belongs to the UPF0246 family.

In Streptococcus agalactiae serotype V (strain ATCC BAA-611 / 2603 V/R), this protein is UPF0246 protein SAG2081.